A 148-amino-acid chain; its full sequence is 3-hydroxyacyl-[acyl-carrier-protein] dehydratase FabZ (148 aa).

Histidine 48 is an active-site residue.

This sequence belongs to the thioester dehydratase family. FabZ subfamily.

The protein resides in the cytoplasm. The enzyme catalyses a (3R)-hydroxyacyl-[ACP] = a (2E)-enoyl-[ACP] + H2O. Its function is as follows. Involved in unsaturated fatty acids biosynthesis. Catalyzes the dehydration of short chain beta-hydroxyacyl-ACPs and long chain saturated and unsaturated beta-hydroxyacyl-ACPs. The polypeptide is 3-hydroxyacyl-[acyl-carrier-protein] dehydratase FabZ (Campylobacter concisus (strain 13826)).